A 492-amino-acid chain; its full sequence is uncharacterized protein (492 aa).

The next 12 helical transmembrane spans lie at 13 to 33 (LGFILASVGSAIGLGNIWRFG), 42 to 62 (GAFLIPYIVALLCVGIPLMIL), 97 to 117 (FIITSYYVVIIAWCLYYLIIL), 150 to 170 (GILVSTLAVWGIVALILSAGI), 180 to 200 (IMIPFLLFLIILLVLNALTLP), 222 to 242 (VWLSAFSQIFFSLSLGFGILI), 258 to 278 (AVTVSLLNCGFSFLAGFAVFG), 320 to 340 (FGIVFFLALVFAGISSAVSIV), 359 to 379 (LLAVLALFIIISPIFTTGAGL), 391 to 411 (GYLLPIAAILEIIIAIWLFGG), 428 to 448 (VWWKYLAGVVSPIILTAVVFL), and 463 to 483 (TTYVIFGALIIPLAFVVSVIL).

Belongs to the sodium:neurotransmitter symporter (SNF) (TC 2.A.22) family.

The protein localises to the cell membrane. In terms of biological role, putative sodium-dependent transporter. This is an uncharacterized protein from Methanocaldococcus jannaschii (strain ATCC 43067 / DSM 2661 / JAL-1 / JCM 10045 / NBRC 100440) (Methanococcus jannaschii).